A 517-amino-acid chain; its full sequence is Nuclear receptor subfamily 5 group A member 2 (517 aa).

Positions 43 to 118 (DEMCPVCGDK…VGMKLEAVRA (76 aa)) form a DNA-binding region, nuclear receptor. Residues C46, C49, C63, C66, C82, C88, C98, and C101 each contribute to the Zn(2+) site. 2 NR C4-type zinc fingers span residues 46 to 66 (CPVCGDKVSGYHYGLLTCESC) and 82 to 101 (CIENQSCQIDKTQRKRCPYC). Residues 112-127 (KLEAVRADRMRGGRNK) form a C-terminal extension (CTE) region. The short motif at 128–147 (FGPMYKRDRALKQQKKALIR) is the FTZ-F1 box element. A disordered region spans residues 182–211 (GLPLSHHHHHHHHHHHHSSSSAGLPPADFD). Basic residues predominate over residues 186–199 (SHHHHHHHHHHHHS). Residues 276–515 (SFPHLVVELL…NLLIEMLHAK (240 aa)) form the NR LBD domain. A phospholipid derivative contacts are provided by residues 397–400 (GATL), Y492, and K496. The AF-2 stretch occupies residues 504–515 (CNNLLIEMLHAK).

It belongs to the nuclear hormone receptor family. NR5 subfamily. Monomer; Binds DNA as a monomer.

It is found in the nucleus. It localises to the chromosome. Its function is as follows. Orphan nuclear receptor that binds DNA as a monomer to the 5'-TCAAGGCCA-3' sequence and controls expression of target genes: regulates key biological processes, such as cholesterol and bile acid synthesis pathways, as well as cartilage, liver and pancreas morphogenesis. Ligand-binding causes conformational change which causes recruitment of coactivators, promoting target gene activation. The specific ligand is unknown, but specific phospholipids, such as phosphatidylethanolamine, phosphatidylserine, dilauroyl phosphatidylcholine and diundecanoyl phosphatidylcholine can act as ligand in vitro. Acts as a pioneer transcription factor, which unwraps target DNA from histones and elicits local opening of closed chromatin. Involved in the formation of connective tissue in lower jaw. In terms of biological role, lacks transcription factor activity; unable to activate expression of target genes. This Danio rerio (Zebrafish) protein is Nuclear receptor subfamily 5 group A member 2.